The primary structure comprises 123 residues: Large ribosomal subunit protein bL17 (123 aa).

The protein belongs to the bacterial ribosomal protein bL17 family. As to quaternary structure, part of the 50S ribosomal subunit. Contacts protein L32.

In Staphylococcus haemolyticus (strain JCSC1435), this protein is Large ribosomal subunit protein bL17.